We begin with the raw amino-acid sequence, 785 residues long: MRTHNLGFPRIGAGRELKKAVEGYWKGRVSRHALEGEAARLRACHWAMQRDAGIDVVPVGDFALYDHMLDLTLMLGAIPPRFSPSGAAASPAGTGQDIDLMFRMARGEAGLSPVAPLEMTKWFDTNYHYLVPELDADTAFAPDASPLVAQLREAQDAGFTPKAVLPGPLTWLWLARSVDGSDRFALLPALCDAYATLLRELTSACPPACPRGYSSGGLMVQLDEPVLALDLPQTVRDLFPAVYTRLRAAVPDATLMVASYFAPCADNLPVALNLPVDVLHLDLVRGRDDLDAALQVLGAGEGTPGLALSLGVVDGRNVWCADIDAAVNLVRRAADSLGEDRVWVAPSCSLLHCPVDLGSERELDPEVARWLAFARQKCAEVRLVAEVVRGVYGPSTAASLEANREVRRQRAVSPRIHDPAVASRLAAVTSDMEHRTSPYAERIVAQRAALHLPTLPTTTIGSFPQTPDIRAARRALRDGSLTQDAYEAAMRDALAMMVREQEALGLDVLVHGEPERNDMVEYFGGLLQGFCITSDGWVQSYGTRCVKPPLLYGDVSRPEPMTVAWSAYARSLTARPMKAMLTGPVTIACWSFVRDDISRETVLRQLALALRDEVADLESAGLAVVQVDEPALREGLPLRRAAQEAYLDAAVRAFRLATSGVADATQLHTHMCYCDFHDIIDRIAGMDADVISLEASRSRMELLDVFATHGYPNEVGPGVYDIHSPRVPSVDEMEALLLRAAAVLPVDRLWVNPDCGLKTREWPETRAALANMVEAARRVRARLDA.

Residues 15–18 (RELK) and lysine 121 contribute to the 5-methyltetrahydropteroyltri-L-glutamate site. Residues 460-462 (IGS) and glutamate 513 each bind L-homocysteine. Residues 460–462 (IGS) and glutamate 513 each bind L-methionine. 5-methyltetrahydropteroyltri-L-glutamate contacts are provided by residues 544–545 (RC) and tryptophan 590. An L-homocysteine-binding site is contributed by aspartate 628. Position 628 (aspartate 628) interacts with L-methionine. Glutamate 634 contributes to the 5-methyltetrahydropteroyltri-L-glutamate binding site. Zn(2+) is bound by residues histidine 670, cysteine 672, and glutamate 694. The active-site Proton donor is histidine 723. Cysteine 755 lines the Zn(2+) pocket.

The protein belongs to the vitamin-B12 independent methionine synthase family. It depends on Zn(2+) as a cofactor.

The enzyme catalyses 5-methyltetrahydropteroyltri-L-glutamate + L-homocysteine = tetrahydropteroyltri-L-glutamate + L-methionine. It participates in amino-acid biosynthesis; L-methionine biosynthesis via de novo pathway; L-methionine from L-homocysteine (MetE route): step 1/1. Its function is as follows. Catalyzes the transfer of a methyl group from 5-methyltetrahydrofolate to homocysteine resulting in methionine formation. The chain is 5-methyltetrahydropteroyltriglutamate--homocysteine methyltransferase from Nitratidesulfovibrio vulgaris (strain ATCC 29579 / DSM 644 / CCUG 34227 / NCIMB 8303 / VKM B-1760 / Hildenborough) (Desulfovibrio vulgaris).